The primary structure comprises 199 residues: Recombination protein RecR (199 aa).

A C4-type zinc finger spans residues 57 to 72; that stretch reads CSSCRTFTEESLCPIC. The 96-residue stretch at 81–176 folds into the Toprim domain; it reads DLICVVETPA…NVSRIAHGVP (96 aa).

Belongs to the RecR family.

In terms of biological role, may play a role in DNA repair. It seems to be involved in an RecBC-independent recombinational process of DNA repair. It may act with RecF and RecO. The protein is Recombination protein RecR of Shewanella loihica (strain ATCC BAA-1088 / PV-4).